A 315-amino-acid chain; its full sequence is Small ribosomal subunit protein uS9m (315 aa).

The transit peptide at 1–42 (MMASLRHSITSALRSSRQGCSKSAQWQSLDQQFGALRISSRS) directs the protein to the mitochondrion. The interval 293 to 315 (PRKVERKKHGHVKARKMPTWVKR) is disordered. Positions 296-315 (VERKKHGHVKARKMPTWVKR) are enriched in basic residues.

Belongs to the universal ribosomal protein uS9 family. Component of the mitochondrial small ribosomal subunit (mt-SSU). Mature N.crassa 74S mitochondrial ribosomes consist of a small (37S) and a large (54S) subunit. The 37S small subunit contains a 16S ribosomal RNA (16S mt-rRNA) and 32 different proteins. The 54S large subunit contains a 23S rRNA (23S mt-rRNA) and 42 different proteins.

It localises to the mitochondrion. Component of the mitochondrial ribosome (mitoribosome), a dedicated translation machinery responsible for the synthesis of mitochondrial genome-encoded proteins, including at least some of the essential transmembrane subunits of the mitochondrial respiratory chain. The mitoribosomes are attached to the mitochondrial inner membrane and translation products are cotranslationally integrated into the membrane. The chain is Small ribosomal subunit protein uS9m (mrp-9) from Neurospora crassa (strain ATCC 24698 / 74-OR23-1A / CBS 708.71 / DSM 1257 / FGSC 987).